Reading from the N-terminus, the 703-residue chain is Cyclomaltodextrin glucanotransferase (703 aa).

Positions M1–A29 are cleaved as a signal peptide. The interval D30 to P160 is A1. The Ca(2+) site is built by D52, N54, N57, and N58. C68 and C75 are joined by a disulfide. Ca(2+) is bound by residues G76 and D78. Residue Y122–W123 coordinates substrate. N161 lines the Ca(2+) pocket. The interval N161–L224 is b. H162 lines the substrate pocket. I212 serves as a coordination point for Ca(2+). N215 to D218 lines the substrate pocket. Residue D221 coordinates Ca(2+). Residues N225 to Y428 are A2. Residue R249 coordinates substrate. The active-site Nucleophile is the D251. K254 to H255 lines the substrate pocket. Residue H255 coordinates Ca(2+). E279 functions as the Proton donor in the catalytic mechanism. Substrate-binding residues include H349, D393, and R397. Residues G429–P516 are c. The tract at residues S517 to L600 is d. One can recognise an IPT/TIG domain in the interval P520–E598. One can recognise a CBM20 domain in the interval V599–W703. The segment at S601–W703 is e.

This sequence belongs to the glycosyl hydrolase 13 family. In terms of assembly, monomer. Ca(2+) is required as a cofactor.

It is found in the secreted. The enzyme catalyses Cyclizes part of a (1-&gt;4)-alpha-D-glucan chain by formation of a (1-&gt;4)-alpha-D-glucosidic bond.. This is Cyclomaltodextrin glucanotransferase (cgt) from Bacillus sp. (strain 1-1).